A 98-amino-acid chain; its full sequence is Cystatin-A (98 aa).

Met-1 bears the N-acetylmethionine mark. Positions 46–50 (QVVAG) match the Secondary area of contact motif.

The protein belongs to the cystatin family.

The protein resides in the cytoplasm. Its function is as follows. This is an intracellular thiol proteinase inhibitor. The protein is Cystatin-A (CSTA) of Felis catus (Cat).